Here is a 181-residue protein sequence, read N- to C-terminus: Adenine phosphoribosyltransferase (181 aa).

It belongs to the purine/pyrimidine phosphoribosyltransferase family. As to quaternary structure, homodimer.

The protein resides in the cytoplasm. It catalyses the reaction AMP + diphosphate = 5-phospho-alpha-D-ribose 1-diphosphate + adenine. It participates in purine metabolism; AMP biosynthesis via salvage pathway; AMP from adenine: step 1/1. Catalyzes a salvage reaction resulting in the formation of AMP, that is energically less costly than de novo synthesis. This chain is Adenine phosphoribosyltransferase, found in Colwellia psychrerythraea (strain 34H / ATCC BAA-681) (Vibrio psychroerythus).